Reading from the N-terminus, the 47-residue chain is PhoP/PhoQ regulator MgrB (47 aa).

The helical transmembrane segment at 6 to 26 (WVVLGIVVVVCLLLWAQVFNI) threads the bilayer.

Belongs to the MgrB family. May form homooligomers. Probably interacts with the periplasmic domain of PhoQ.

The protein resides in the cell inner membrane. Functionally, phoP-regulated transcription is redox-sensitive, being activated when the periplasm becomes more reducing. MgrB acts between DsbA/DsbB and PhoP/PhoQ in this pathway. Represses PhoP/PhoQ signaling, possibly by binding to the periplasmic domain of PhoQ, altering its activity and that of downstream effector PhoP. This chain is PhoP/PhoQ regulator MgrB, found in Salmonella agona (strain SL483).